The primary structure comprises 208 residues: Heavy metal-associated isoprenylated plant protein 42 (208 aa).

The HMA domain maps to 6–70; it reads FPICILKMNL…AVAKLGQSPQ (65 aa). The tract at residues 93-116 is disordered; sequence ATNKTQDKPSPPAPPVTATTPVET. Cysteine methyl ester is present on Cys205. The S-farnesyl cysteine moiety is linked to residue Cys205. Positions 206 to 208 are cleaved as a propeptide — removed in mature form; that stretch reads SIM.

Belongs to the HIPP family.

Probable heavy-metal-binding protein. The sequence is that of Heavy metal-associated isoprenylated plant protein 42 from Arabidopsis thaliana (Mouse-ear cress).